A 153-amino-acid polypeptide reads, in one-letter code: UPF0260 protein YcgN (153 aa).

It belongs to the UPF0260 family.

The chain is UPF0260 protein YcgN from Shigella flexneri serotype 5b (strain 8401).